The following is a 400-amino-acid chain: Coenzyme A biosynthesis bifunctional protein CoaBC (400 aa).

Residues 1-190 (MKLNGKHIVV…SQKQDLQGLN (190 aa)) form a phosphopantothenoylcysteine decarboxylase region. Cys158 (proton donor) is an active-site residue. The segment at 191 to 400 (VSITAGPTRE…EIIERYQKTL (210 aa)) is phosphopantothenate--cysteine ligase. CTP is bound by residues 273-275 (GCA), Asp279, Lys289, 305-308 (PDII), Phe324, Lys338, and Lys342.

In the N-terminal section; belongs to the HFCD (homo-oligomeric flavin containing Cys decarboxylase) superfamily. The protein in the C-terminal section; belongs to the PPC synthetase family. The cofactor is Mg(2+). It depends on FMN as a cofactor.

It catalyses the reaction N-[(R)-4-phosphopantothenoyl]-L-cysteine + H(+) = (R)-4'-phosphopantetheine + CO2. It carries out the reaction (R)-4'-phosphopantothenate + L-cysteine + CTP = N-[(R)-4-phosphopantothenoyl]-L-cysteine + CMP + diphosphate + H(+). It functions in the pathway cofactor biosynthesis; coenzyme A biosynthesis; CoA from (R)-pantothenate: step 2/5. It participates in cofactor biosynthesis; coenzyme A biosynthesis; CoA from (R)-pantothenate: step 3/5. In terms of biological role, catalyzes two sequential steps in the biosynthesis of coenzyme A. In the first step cysteine is conjugated to 4'-phosphopantothenate to form 4-phosphopantothenoylcysteine. In the second step the latter compound is decarboxylated to form 4'-phosphopantotheine. The polypeptide is Coenzyme A biosynthesis bifunctional protein CoaBC (Haemophilus influenzae (strain ATCC 51907 / DSM 11121 / KW20 / Rd)).